The primary structure comprises 65 residues: Sperm protamine P1 (65 aa).

Positions Met1 to Tyr65 are disordered.

This sequence belongs to the protamine P1 family. In terms of tissue distribution, testis.

Its subcellular location is the nucleus. It localises to the chromosome. Its function is as follows. Protamines substitute for histones in the chromatin of sperm during the haploid phase of spermatogenesis. They compact sperm DNA into a highly condensed, stable and inactive complex. In Lagorchestes hirsutus (Rufous hare-wallaby), this protein is Sperm protamine P1 (PRM1).